The following is a 169-amino-acid chain: Mu-like prophage FluMu host-nuclease inhibitor protein gam (169 aa).

To phage Mu protein gam.

Functionally, protects linear double-stranded DNA of Mu genome from exonuclease degradation. This Haemophilus influenzae (strain ATCC 51907 / DSM 11121 / KW20 / Rd) protein is Mu-like prophage FluMu host-nuclease inhibitor protein gam.